Reading from the N-terminus, the 609-residue chain is Transcription factor ntnD (609 aa).

The segment at residues 1 to 7 (MCVGIEC) is a DNA-binding region (zn(2)-C6 fungal-type). A disordered region spans residues 46–104 (FRDQNESSLNRIHNRRTSNSQPSTRSINNTTTIPASNNEPLALSQPPSASSQNQVEKDQ). The segment covering 51 to 84 (ESSLNRIHNRRTSNSQPSTRSINNTTTIPASNNE) has biased composition (polar residues). Over residues 85-97 (PLALSQPPSASSQ) the composition is skewed to low complexity.

This sequence belongs to the TRI10 transcription regulator family.

Its subcellular location is the nucleus. In terms of biological role, transcription factor; part of the gene cluster that mediates the biosynthesis of meroterpenoids. This chain is Transcription factor ntnD, found in Nectria sp.